The sequence spans 198 residues: Protein GrpE (198 aa).

The protein belongs to the GrpE family. Homodimer.

The protein resides in the cytoplasm. Functionally, participates actively in the response to hyperosmotic and heat shock by preventing the aggregation of stress-denatured proteins, in association with DnaK and GrpE. It is the nucleotide exchange factor for DnaK and may function as a thermosensor. Unfolded proteins bind initially to DnaJ; upon interaction with the DnaJ-bound protein, DnaK hydrolyzes its bound ATP, resulting in the formation of a stable complex. GrpE releases ADP from DnaK; ATP binding to DnaK triggers the release of the substrate protein, thus completing the reaction cycle. Several rounds of ATP-dependent interactions between DnaJ, DnaK and GrpE are required for fully efficient folding. This is Protein GrpE from Actinobacillus pleuropneumoniae serotype 3 (strain JL03).